Reading from the N-terminus, the 513-residue chain is MQLNPSEISELIKSRIQGLEASADVRNQGTVISVTDGIVRIHGLSEVMQGEMLEFPGNTFGLALNLERDSVGAVILGEYEHISEGDVVKTTGRILEVPVGPELLGRVVDALGNPIDGKGPINAKKTDAIEKIAPGVIWRKSVSEPVQTGLKSIDAMVPVGRGQRELIIGDRQCGKTAVAVDTIINQKGKNLFCIYVAIGQKASSIMNVVRKLEETGALEYTIVVAASASESAAMQYLAPYAGCTMGEYFRDRGQDALIVYDDLTKQAWAYRQISLLLRRPPGREAYPGDVFYLHSRLLERAARVSEDYVEKFTNGEVKGKSGSLTALPVIETQAGDVTAFVPTNVISITDGQIFLETDLFNAGIRPAINAGVSVSRVGGAAQTKVVKKLSGGIRTDLAQYRELAAFAQFASDLDEATRKQLERGRRVTELLKQPQYQPLQVWELAVALFAANNGYLDDLEVAQVLPFEKGLRDYLKSKHADLIKRIEDTKELSKDDEALLHTALKDFKKSGAY.

Residue 169-176 participates in ATP binding; the sequence is GDRQCGKT.

Belongs to the ATPase alpha/beta chains family. As to quaternary structure, F-type ATPases have 2 components, CF(1) - the catalytic core - and CF(0) - the membrane proton channel. CF(1) has five subunits: alpha(3), beta(3), gamma(1), delta(1), epsilon(1). CF(0) has three main subunits: a(1), b(2) and c(9-12). The alpha and beta chains form an alternating ring which encloses part of the gamma chain. CF(1) is attached to CF(0) by a central stalk formed by the gamma and epsilon chains, while a peripheral stalk is formed by the delta and b chains.

The protein localises to the cell inner membrane. It carries out the reaction ATP + H2O + 4 H(+)(in) = ADP + phosphate + 5 H(+)(out). Produces ATP from ADP in the presence of a proton gradient across the membrane. The alpha chain is a regulatory subunit. In Paraburkholderia xenovorans (strain LB400), this protein is ATP synthase subunit alpha 2.